The sequence spans 81 residues: ATP synthase subunit c, chloroplastic (81 aa).

2 helical membrane passes run 3–23 (PIIS…ASIG) and 57–77 (LAFM…LLFA).

Belongs to the ATPase C chain family. F-type ATPases have 2 components, F(1) - the catalytic core - and F(0) - the membrane proton channel. F(1) has five subunits: alpha(3), beta(3), gamma(1), delta(1), epsilon(1). F(0) has four main subunits: a(1), b(1), b'(1) and c(10-14). The alpha and beta chains form an alternating ring which encloses part of the gamma chain. F(1) is attached to F(0) by a central stalk formed by the gamma and epsilon chains, while a peripheral stalk is formed by the delta, b and b' chains.

The protein localises to the plastid. It is found in the chloroplast thylakoid membrane. Functionally, f(1)F(0) ATP synthase produces ATP from ADP in the presence of a proton or sodium gradient. F-type ATPases consist of two structural domains, F(1) containing the extramembraneous catalytic core and F(0) containing the membrane proton channel, linked together by a central stalk and a peripheral stalk. During catalysis, ATP synthesis in the catalytic domain of F(1) is coupled via a rotary mechanism of the central stalk subunits to proton translocation. Key component of the F(0) channel; it plays a direct role in translocation across the membrane. A homomeric c-ring of between 10-14 subunits forms the central stalk rotor element with the F(1) delta and epsilon subunits. In Cicer arietinum (Chickpea), this protein is ATP synthase subunit c, chloroplastic.